The primary structure comprises 60 residues: Mastoparan-V (60 aa).

An N-terminal signal peptide occupies residues 1–27 (MKNTILILFTAFIALLGFFGMSAEALA). AXPX repeat units follow at residues 27 to 30 (ADPV), 31 to 34 (ADPL), 35 to 38 (AGPN), and 41 to 44 (ADPE). A propeptide spanning residues 28 to 45 (DPVADPLAGPNAEADPEA) is cleaved from the precursor. A Leucine amide modification is found at Leu-59.

The protein belongs to the MCD family. Mastoparan subfamily. Expressed by the venom gland.

It localises to the secreted. The protein resides in the target cell membrane. Antimicrobial and mast cell degranulating peptide. Has broad spectrum antibacterial activity against both Gram-positive and Gram-negative bacteria (S.aureus MIC=32-64 ug/ml, S.xylosus MIC=3 ug/ml, S.alactolyticus MIC=16 ug/ml, C.koseri MIC=4 ug/ml, E.coli MIC=8 ug/ml, K.pneumoniae MIC=64 ug/ml, P.aerugiosa MIC=256 ug/ml, S.choleraesuis MIC=32 ug/ml, S.typhimurium MIC=32 ug/ml, V.parahamelytics MIC=32 ug/ml). Affects membrane permeability of E.coli. Shows hemolytic activities on sheep, chicken and human erythrocytes. Its mast cell degranulation activity may be related to the activation of G-protein coupled receptors in mast cells as well as interaction with other proteins located in cell endosomal membranes in the mast cells. The chain is Mastoparan-V from Vespa velutina flavitarsus (Asian hornet).